We begin with the raw amino-acid sequence, 316 residues long: IDS-like terpene synthase 2 (316 aa).

The Mg(2+) site is built by Asp-69 and Asp-73.

This sequence belongs to the FPP/GGPP synthase family. Mg(2+) is required as a cofactor.

It catalyses the reaction (2E)-geranyl diphosphate + H2O = linalool + diphosphate. The enzyme catalyses (2E,6E)-farnesyl diphosphate + H2O = (6E)-nerolidol + diphosphate. Terpene synthase that shows monoterpene synthase activity and produces linalool, using geranyl diphosphate (GPP) as substrate. Also shows sesquiterpene synthase activity as it is able to convert farnesyl diphosphate (FPP) into (E)-nerolidol. This Melampsora larici-populina (strain 98AG31 / pathotype 3-4-7) (Poplar leaf rust fungus) protein is IDS-like terpene synthase 2.